The sequence spans 409 residues: LL-diaminopimelate aminotransferase (409 aa).

Residues Tyr-15 and Gly-42 each coordinate substrate. Pyridoxal 5'-phosphate-binding positions include Tyr-72, Ser-108 to Lys-109, Tyr-132, Asn-187, Tyr-218, and Ser-246 to Ser-248. 3 residues coordinate substrate: Lys-109, Tyr-132, and Asn-187. Lys-249 carries the N6-(pyridoxal phosphate)lysine modification. Pyridoxal 5'-phosphate is bound by residues Arg-257 and Asn-292. Asn-292 and Arg-388 together coordinate substrate.

This sequence belongs to the class-I pyridoxal-phosphate-dependent aminotransferase family. LL-diaminopimelate aminotransferase subfamily. In terms of assembly, homodimer. The cofactor is pyridoxal 5'-phosphate.

The catalysed reaction is (2S,6S)-2,6-diaminopimelate + 2-oxoglutarate = (S)-2,3,4,5-tetrahydrodipicolinate + L-glutamate + H2O + H(+). The protein operates within amino-acid biosynthesis; L-lysine biosynthesis via DAP pathway; LL-2,6-diaminopimelate from (S)-tetrahydrodipicolinate (aminotransferase route): step 1/1. Involved in the synthesis of meso-diaminopimelate (m-DAP or DL-DAP), required for both lysine and peptidoglycan biosynthesis. Catalyzes the direct conversion of tetrahydrodipicolinate to LL-diaminopimelate. The polypeptide is LL-diaminopimelate aminotransferase (Acaryochloris marina (strain MBIC 11017)).